The following is a 559-amino-acid chain: Urocanate hydratase (559 aa).

NAD(+)-binding positions include 53–54, Gln131, 177–179, Glu197, Arg202, 243–244, 264–268, 274–275, and Tyr323; these read GG, GMG, NA, QTSAH, and YL. Residue Cys411 is part of the active site. Gly493 serves as a coordination point for NAD(+).

It belongs to the urocanase family. NAD(+) is required as a cofactor.

Its subcellular location is the cytoplasm. The catalysed reaction is 4-imidazolone-5-propanoate = trans-urocanate + H2O. Its pathway is amino-acid degradation; L-histidine degradation into L-glutamate; N-formimidoyl-L-glutamate from L-histidine: step 2/3. Its function is as follows. Catalyzes the conversion of urocanate to 4-imidazolone-5-propionate. This chain is Urocanate hydratase, found in Pseudomonas aeruginosa (strain LESB58).